The sequence spans 274 residues: Fatty-acid O-methyltransferase (274 aa).

This sequence belongs to the methyltransferase superfamily.

The catalysed reaction is a fatty acid + S-adenosyl-L-methionine = a fatty acid methyl ester + S-adenosyl-L-homocysteine. Functionally, O-methyltransferase that modifies the hydroxy group of the fatty acids. Oleate is the most effective fatty acid acceptor. This chain is Fatty-acid O-methyltransferase (mtf2), found in Mycolicibacterium smegmatis (strain ATCC 700084 / mc(2)155) (Mycobacterium smegmatis).